The following is a 245-amino-acid chain: Superoxide dismutase [Mn], mitochondrial (245 aa).

The N-terminal 32 residues, 1–32 (MVNLGSIWQNLLASQAPLQSMTGNATTMAGLA), are a transit peptide targeting the mitochondrion. Residues histidine 58, histidine 106, aspartate 196, and histidine 200 each contribute to the Mn(2+) site.

The protein belongs to the iron/manganese superoxide dismutase family. In terms of assembly, homotetramer. It depends on Mn(2+) as a cofactor.

It is found in the mitochondrion matrix. The enzyme catalyses 2 superoxide + 2 H(+) = H2O2 + O2. Functionally, destroys superoxide anion radicals which are normally produced within the cells and which are toxic to biological systems. The protein is Superoxide dismutase [Mn], mitochondrial (sod-2) of Neurospora crassa (strain ATCC 24698 / 74-OR23-1A / CBS 708.71 / DSM 1257 / FGSC 987).